Here is a 216-residue protein sequence, read N- to C-terminus: Octanoyltransferase (216 aa).

A BPL/LPL catalytic domain is found at 30–216 (GEAGEAVWLL…KRQFFEVFGA (187 aa)). Residues 69-76 (RGGQYTYH), 149-151 (AIG), and 162-164 (GLS) contribute to the substrate site. Cys180 serves as the catalytic Acyl-thioester intermediate.

Belongs to the LipB family.

The protein localises to the cytoplasm. It carries out the reaction octanoyl-[ACP] + L-lysyl-[protein] = N(6)-octanoyl-L-lysyl-[protein] + holo-[ACP] + H(+). The protein operates within protein modification; protein lipoylation via endogenous pathway; protein N(6)-(lipoyl)lysine from octanoyl-[acyl-carrier-protein]: step 1/2. Its function is as follows. Catalyzes the transfer of endogenously produced octanoic acid from octanoyl-acyl-carrier-protein onto the lipoyl domains of lipoate-dependent enzymes. Lipoyl-ACP can also act as a substrate although octanoyl-ACP is likely to be the physiological substrate. This chain is Octanoyltransferase, found in Jannaschia sp. (strain CCS1).